The sequence spans 71 residues: Gas vesicle protein A (71 aa).

Positions 12-22 (LAEVIDRILDK) are alpha helix 1. Residues 23-32 (GIVIDAWVRV) are beta-strand 1. Residues 33–36 (SLVG) are beta turn. A beta-strand 2 region spans residues 37–46 (IELLAIEARI). The interval 47 to 70 (VIASVETYLKYAEAVGLTQSAAVP) is alpha helix 2.

Belongs to the gas vesicle GvpA family. In terms of assembly, the gas vesicle shell is 2 nm thick and consists of a single layer of this protein. It forms helical ribs nearly perpendicular to the long axis of the vesicle.

The protein resides in the gas vesicle shell. Its function is as follows. Gas vesicles (GV) are hollow, gas filled proteinaceous nanostructures found in some microorganisms. During planktonic growth they allow positioning of the organism at a favorable depth for light or nutrient acquisition. GVs are highly permeable to gas. GvpA forms the protein shell. The ratio of GvpA:GvpC is estimated to be 33:1 and more recently 25:1. This is Gas vesicle protein A from Dolichospermum flosaquae (Anabaena flos-aquae).